Reading from the N-terminus, the 406-residue chain is Argininosuccinate synthase (406 aa).

Residues 13 to 21 (AYSGGLDTS) and Ala-40 contribute to the ATP site. Tyr-91 and Ser-96 together coordinate L-citrulline. Gly-121 provides a ligand contact to ATP. Thr-123, Asn-127, and Asp-128 together coordinate L-aspartate. Residue Asn-127 coordinates L-citrulline. L-citrulline-binding residues include Arg-131, Ser-180, Ser-189, Glu-265, and Tyr-277.

It belongs to the argininosuccinate synthase family. Type 1 subfamily. As to quaternary structure, homotetramer.

Its subcellular location is the cytoplasm. The catalysed reaction is L-citrulline + L-aspartate + ATP = 2-(N(omega)-L-arginino)succinate + AMP + diphosphate + H(+). The protein operates within amino-acid biosynthesis; L-arginine biosynthesis; L-arginine from L-ornithine and carbamoyl phosphate: step 2/3. This is Argininosuccinate synthase from Syntrophotalea carbinolica (strain DSM 2380 / NBRC 103641 / GraBd1) (Pelobacter carbinolicus).